The sequence spans 123 residues: uncharacterized protein (123 aa).

A helical transmembrane segment spans residues 5-25; sequence GTLVIIFAIVLILCIMLLFFY. The interval 33–54 is disordered; sequence PGVLPPPIPPPTPPPPKKKYDH. The segment covering 35–47 has biased composition (pro residues); it reads VLPPPIPPPTPPP.

This sequence belongs to the asfivirus CP123L family.

It localises to the host membrane. The protein localises to the virion. This is an uncharacterized protein from African swine fever virus (isolate Warthog/Namibia/Wart80/1980) (ASFV).